Here is a 593-residue protein sequence, read N- to C-terminus: MAPDTCCCSATALRRRLPVLAWVPDYSLQWLRLDFIAGLSVGLTVIPQALAYAEVAGLPPQYGLYSAFMGCFVYFFLGTSRDVTLGPTAIMSLLVSFYTFREPAYAVLLAFLSGCIQLAMGLLHLGFLLDFISCPVIKGFTSAASITIGFGQIKNLLGLQKIPRQFFLQVYHTFLHIGETRVGDAVLGLASMLLLLVLKCMREHMPPPHPEMPLAVKFSRGLVWTVTTARNALVVSSAALIAYAFEVTGSHPFVLTGKIAEGLPPVRIPPFSVTRDNKTISFSEMVQDMGAGLAVVPLMGLLESIAVAKSFASQNNYRIDANQELLAIGLTNVLGSLVSSYPVTGSFGRTAVNAQTGVCTPAGGLVTGALVLLSLNYLTSLFSYIPKSALAAVIITAVTPLFDVKIFRSLWRVQRLDLLPLCVTFLLSFWEIQYGILAGSLVSLLILLHSVARPKTQVSEGQIFVLQPASGLYFPAIDALREAITNRALEASPPRSAVLECTHISSVDYTVIVGLGELLEDFQKKGVALAFVGLQVPVLRTLLAADLKGFRYFTTLEEAEKFLQQEPGTEPNSIHEDAVPEQRSSLLKSPSGP.

Topologically, residues 1-34 (MAPDTCCCSATALRRRLPVLAWVPDYSLQWLRLD) are extracellular. Residues 35 to 55 (FIAGLSVGLTVIPQALAYAEV) form a helical membrane-spanning segment. A56 is a topological domain (cytoplasmic). A helical membrane pass occupies residues 57-77 (GLPPQYGLYSAFMGCFVYFFL). The Extracellular segment spans residues 78–82 (GTSRD). A helical membrane pass occupies residues 83–100 (VTLGPTAIMSLLVSFYTF). At 101 to 106 (REPAYA) the chain is on the cytoplasmic side. A helical membrane pass occupies residues 107-127 (VLLAFLSGCIQLAMGLLHLGF). Over 128 to 176 (LLDFISCPVIKGFTSAASITIGFGQIKNLLGLQKIPRQFFLQVYHTFLH) the chain is Extracellular. Residues 177–197 (IGETRVGDAVLGLASMLLLLV) traverse the membrane as a helical segment. The Cytoplasmic portion of the chain corresponds to 198 to 233 (LKCMREHMPPPHPEMPLAVKFSRGLVWTVTTARNAL). The helical transmembrane segment at 234–254 (VVSSAALIAYAFEVTGSHPFV) threads the bilayer. Residues 255–287 (LTGKIAEGLPPVRIPPFSVTRDNKTISFSEMVQ) are Extracellular-facing. The chain crosses the membrane as a helical span at residues 288 to 308 (DMGAGLAVVPLMGLLESIAVA). Topologically, residues 309-324 (KSFASQNNYRIDANQE) are cytoplasmic. Residues 325–345 (LLAIGLTNVLGSLVSSYPVTG) form a helical membrane-spanning segment. The Extracellular segment spans residues 346–361 (SFGRTAVNAQTGVCTP). Residues 362–382 (AGGLVTGALVLLSLNYLTSLF) form a helical membrane-spanning segment. S383 is a topological domain (cytoplasmic). A helical transmembrane segment spans residues 384 to 404 (YIPKSALAAVIITAVTPLFDV). Residues 405–417 (KIFRSLWRVQRLD) are Extracellular-facing. A helical membrane pass occupies residues 418 to 438 (LLPLCVTFLLSFWEIQYGILA). At 439–593 (GSLVSLLILL…SSLLKSPSGP (155 aa)) the chain is on the cytoplasmic side. The STAS domain maps to 453–566 (RPKTQVSEGQ…EEAEKFLQQE (114 aa)). The disordered stretch occupies residues 564–593 (QQEPGTEPNSIHEDAVPEQRSSLLKSPSGP). Polar residues predominate over residues 582–593 (QRSSLLKSPSGP).

This sequence belongs to the SLC26A/SulP transporter (TC 2.A.53) family. In terms of tissue distribution, abundantly expressed in the cerebellum, with a predominant expression in Purkinje cells (at protein level). As to expression, predominantly expressed in the kidney and brain. In the kidney localizes in collecting duct intercalated cells (at protein level). Predominantly expressed in the brain with lower levels in the kidney.

The protein localises to the cell membrane. It is found in the lysosome membrane. Its subcellular location is the apical cell membrane. It localises to the basolateral cell membrane. It catalyses the reaction hydrogencarbonate(in) + chloride(out) = hydrogencarbonate(out) + chloride(in). It carries out the reaction sulfate(in) + H(+)(in) = sulfate(out) + H(+)(out). The catalysed reaction is oxalate(in) + chloride(out) = oxalate(out) + chloride(in). Functionally, sodium-independent anion exchanger mediating bicarbonate, chloride, sulfate and oxalate transport. Exhibits sodium-independent sulfate anion transporter activity that may cooperate with SLC26A2 to mediate DIDS-sensitive sulfate uptake into high endothelial venules endothelial cells (HEVEC). In the kidney, mediates chloride-bicarbonate exchange, facilitating V-ATPase-mediated acid secretion. May function as a chloride channel, playing an important role in moderating chloride homeostasis and neuronal activity in the cerebellum. This chain is Sodium-independent sulfate anion transporter, found in Mus musculus (Mouse).